We begin with the raw amino-acid sequence, 689 residues long: MMKRQLHRMRQLAHTGSSGRTPETAEFLGEDLLQVEQRLEPAKRAAHNVHKRLQACLQGQSGADMDKRVKKLPLMALSTAMAESFKELDPDSSMGKALEMSCAIQNQLARILAEFEMTLERDVLQPLNRLSEEELPAILKRKKSLQKLVSDWNTLKSRLSQAAKNSGSSQSLGGGSSSHTHMATANKVETLKEDEEELKRKVEQCKDEYLADLYHFSTKEDSYANYFTHLLEIQADYHRKSLTSLDTALAELRDNHSQADSSPLTTAAPFSRVYGVSLRTHLQDLGRDIALPIEACVLLLLSEGMQEEGLFRLAAGASVLKRLKQTMASDPHSLEEFCSDPHAVAGALKSYLRELPEPLMTSDLYDDWMRAASLKEPGARLEALHDVCSRLPQENFNNLRYLMKFLALLAEEQDVNKMTPSNIAIVLGPNLLWPPEKEGDQAQLDAASVSSIQVVGVVEVLIQNADTLFPGDINFSVSGIFSGLAPQEKPNSQQVSEELAPVAVPATAATPTPTPAPTPAPASMTVKERTESELPKPASPKVSRSPTDTTALAEDMTRKTKRPAPARPTMPPPQPSSSRSSPPALSLPAGSVSPGTPQALPRRLVGTSLRAPTVPPPLPPAPPQPARRQSRRLPVSPCPASPVISNMPAQVDQGAATEDRGGPEAVGGHPPTPVLPPQPRPRGLISETD.

Residues 1–11 show a composition bias toward basic residues; sequence MMKRQLHRMRQ. The interval 1–24 is disordered; it reads MMKRQLHRMRQLAHTGSSGRTPET. Residues 1-275 are interaction with CGNL1; sequence MMKRQLHRMR…TAAPFSRVYG (275 aa). The BAR domain occupies 17 to 262; sequence SSGRTPETAE…RDNHSQADSS (246 aa). 2 positions are modified to phosphoserine: serine 241 and serine 262. The 194-residue stretch at 276-469 folds into the Rho-GAP domain; the sequence is VSLRTHLQDL…VLIQNADTLF (194 aa). An interaction with CD2AP region spans residues 470–689; it reads PGDINFSVSG…RPRGLISETD (220 aa). Residues 507 to 689 are disordered; the sequence is TAATPTPTPA…RPRGLISETD (183 aa). Residues serine 539 and serine 545 each carry the phosphoserine modification. The span at 565–575 shows a compositional bias: pro residues; sequence PARPTMPPPQP. Low complexity predominate over residues 576 to 594; that stretch reads SSSRSSPPALSLPAGSVSP. Serine 586 is modified (phosphoserine). The residue at position 596 (threonine 596) is a Phosphothreonine. The SH3-binding signature appears at 611–620; it reads APTVPPPLPP. The span at 613 to 625 shows a compositional bias: pro residues; it reads TVPPPLPPAPPQP. Serine 641 carries the phosphoserine modification. Over residues 670 to 680 the composition is skewed to pro residues; sequence PPTPVLPPQPR.

As to quaternary structure, interacts with RAC1. Interacts with the exocyst via EXOC4 and EXOC8; required for the localization of both SH3BP1 and the exocyst to the leading edge of migrating cells. Interacts with CD2AP and CGNL1; probably part of a complex at cell junctions. Interacts with CAPZA1; recruits CAPZA1 to forming cell junctions. May interact with AFDN. Interacts with PLXND1; they dissociate upon SEMA3E binding to PLXND1 allowing SH3BP1 to transduce downstream signal through RAC1 inactivation. Interacts with ABL1, GRB2 and SRC (via SH3 domain).

Its subcellular location is the cell projection. It localises to the cell junction. It is found in the tight junction. The protein localises to the adherens junction. The protein resides in the phagocytic cup. Its subcellular location is the nucleus. It localises to the cytoplasm. It is found in the cytosol. Functionally, GTPase activating protein/GAP which specifically converts GTP-bound Rho-type GTPases including RAC1 and CDC42 in their inactive GDP-bound form. By specifically inactivating RAC1 at the leading edge of migrating cells, it regulates the spatiotemporal organization of cell protrusions which is important for proper cell migration. Also negatively regulates CDC42 in the process of actin remodeling and the formation of epithelial cell junctions. Through its GAP activity toward RAC1 and/or CDC42 plays a specific role in phagocytosis of large particles. Specifically recruited by a PI3 kinase/PI3K-dependent mechanism to sites of large particles engagement, inactivates RAC1 and/or CDC42 allowing the reorganization of the underlying actin cytoskeleton required for engulfment. It also plays a role in angiogenesis and the process of repulsive guidance as part of a semaphorin-plexin signaling pathway. Following the binding of PLXND1 to extracellular SEMA3E it dissociates from PLXND1 and inactivates RAC1, inducing the intracellular reorganization of the actin cytoskeleton and the collapse of cells. The protein is SH3 domain-binding protein 1 of Rattus norvegicus (Rat).